Consider the following 156-residue polypeptide: Ribosome maturation factor RimP (156 aa).

It belongs to the RimP family.

The protein localises to the cytoplasm. In terms of biological role, required for maturation of 30S ribosomal subunits. This is Ribosome maturation factor RimP from Halalkalibacterium halodurans (strain ATCC BAA-125 / DSM 18197 / FERM 7344 / JCM 9153 / C-125) (Bacillus halodurans).